We begin with the raw amino-acid sequence, 225 residues long: Orotate phosphoribosyltransferase (225 aa).

Lys29 is a 5-phospho-alpha-D-ribose 1-diphosphate binding site. Orotate is bound at residue Phe37 to Phe38. 5-phospho-alpha-D-ribose 1-diphosphate-binding positions include Tyr75–Lys76, Arg101, Lys102, Lys105, His107, and Asp126–Ser134. The orotate site is built by Ser130 and Arg158.

Belongs to the purine/pyrimidine phosphoribosyltransferase family. PyrE subfamily. Homodimer. The cofactor is Mg(2+).

It catalyses the reaction orotidine 5'-phosphate + diphosphate = orotate + 5-phospho-alpha-D-ribose 1-diphosphate. The protein operates within pyrimidine metabolism; UMP biosynthesis via de novo pathway; UMP from orotate: step 1/2. Catalyzes the transfer of a ribosyl phosphate group from 5-phosphoribose 1-diphosphate to orotate, leading to the formation of orotidine monophosphate (OMP). In Ralstonia pickettii (strain 12J), this protein is Orotate phosphoribosyltransferase.